The primary structure comprises 166 residues: Deoxyuridine 5'-triphosphate nucleotidohydrolase (166 aa).

The disordered stretch occupies residues 1-24 (MACVNEPSPKLQKLDRNGIHGDSS). E138 is a binding site for Mg(2+).

Belongs to the dUTPase family. In terms of assembly, homotrimer. It depends on Mg(2+) as a cofactor.

The catalysed reaction is dUTP + H2O = dUMP + diphosphate + H(+). It functions in the pathway pyrimidine metabolism; dUMP biosynthesis; dUMP from dCTP (dUTP route): step 2/2. Its function is as follows. This enzyme is involved in nucleotide metabolism: it produces dUMP, the immediate precursor of thymidine nucleotides and it decreases the intracellular concentration of dUTP, preventing uracil incorporation into DNA. This chain is Deoxyuridine 5'-triphosphate nucleotidohydrolase (DUT), found in Arabidopsis thaliana (Mouse-ear cress).